The primary structure comprises 1522 residues: Dicer-like protein 1 (1522 aa).

Residues 1–12 show a composition bias toward acidic residues; that stretch reads MTWAGDVEEQDD. Residues 1-37 are disordered; sequence MTWAGDVEEQDDYFSCSDVSTSGDRRKRAPQTVTQEE. In terms of domain architecture, Helicase ATP-binding spans 76-258; the sequence is LFLRAKMQNT…EHVREAAREL (183 aa). 89 to 96 lines the ATP pocket; that stretch reads LDTGTGKT. The short motif at 202–205 is the DEAH box element; sequence DEAH. Positions 408 to 576 constitute a Helicase C-terminal domain; it reads WLNLYYERTT…DVEQEKAELI (169 aa). The Dicer dsRNA-binding fold domain maps to 600 to 700; sequence SLSILSHFVA…LPTISKYLPA (101 aa). A PAZ domain is found at 859 to 980; that stretch reads PFWKWSPQSR…ICPEPLHISN (122 aa). RNase III domains are found at residues 995–1166 and 1222–1373; these read IIHR…MQHH and AHKI…VDSE. Residues E1262, D1359, and E1362 each contribute to the Mg(2+) site. One can recognise a DRBM domain in the interval 1409 to 1478; the sequence is TRLSRLLSIN…SHAALEKLEG (70 aa). The Zn(2+) site is built by C1421, H1449, C1490, and C1492.

This sequence belongs to the helicase family. Dicer subfamily. Mg(2+) is required as a cofactor. The cofactor is Mn(2+).

Functionally, dicer-like endonuclease involved in cleaving double-stranded RNA in the RNA interference (RNAi) pathway. Produces 21 to 25 bp dsRNAs (siRNAs) which target the selective destruction of homologous RNAs leading to sequence-specific suppression of gene expression, called post-transcriptional gene silencing (PTGS). Part of a broad host defense response against viral infection and transposons. The protein is Dicer-like protein 1 (DCL1) of Phaeosphaeria nodorum (strain SN15 / ATCC MYA-4574 / FGSC 10173) (Glume blotch fungus).